A 414-amino-acid chain; its full sequence is tRNA methyltransferase 10 homolog C (414 aa).

The N-terminal 35 residues, 1-35 (MNVTVRFLRPFARCLVPYTFHRKRSHLYSGVLQRY), are a transit peptide targeting the mitochondrion. Serine 79 carries the post-translational modification Phosphoserine. The stretch at 133–171 (GKEKAKKAKQVKKEMKAEAREEAKRARLLETTAEEQQQD) forms a coiled coil. One can recognise an SAM-dependent MTase TRM10-type domain in the interval 186–378 (LGWKGVQAMQ…KFVPRRKHTG (193 aa)).

Belongs to the class IV-like SAM-binding methyltransferase superfamily. TRM10 family. As to quaternary structure, component of mitochondrial ribonuclease P, a complex composed of TRMT10C/MRPP1, HSD17B10/MRPP2 and PRORP/MRPP3. Interacts with HSD17B10/MRPP2; forming the MRPP1-MRPP2 subcomplex of the mitochondrial ribonuclease P complex. Interacts with GRSF1.

The protein resides in the mitochondrion matrix. Its subcellular location is the mitochondrion nucleoid. The catalysed reaction is adenosine(9) in tRNA + S-adenosyl-L-methionine = N(1)-methyladenosine(9) in tRNA + S-adenosyl-L-homocysteine + H(+). It catalyses the reaction guanosine(9) in tRNA + S-adenosyl-L-methionine = N(1)-methylguanosine(9) in tRNA + S-adenosyl-L-homocysteine + H(+). The enzyme catalyses an adenosine in mRNA + S-adenosyl-L-methionine = an N(1)-methyladenosine in mRNA + S-adenosyl-L-homocysteine + H(+). Its function is as follows. Mitochondrial tRNA N(1)-methyltransferase involved in mitochondrial tRNA maturation. Component of mitochondrial ribonuclease P, a complex composed of TRMT10C/MRPP1, HSD17B10/MRPP2 and PRORP/MRPP3, which cleaves tRNA molecules in their 5'-ends. Together with HSD17B10/MRPP2, forms a subcomplex of the mitochondrial ribonuclease P, named MRPP1-MRPP2 subcomplex, which displays functions that are independent of the ribonuclease P activity. The MRPP1-MRPP2 subcomplex catalyzes the formation of N(1)-methylguanine and N(1)-methyladenine at position 9 (m1G9 and m1A9, respectively) in tRNAs; TRMT10C/MRPP1 acting as the catalytic N(1)-methyltransferase subunit. The MRPP1-MRPP2 subcomplex also acts as a tRNA maturation platform: following 5'-end cleavage by the mitochondrial ribonuclease P complex, the MRPP1-MRPP2 subcomplex enhances the efficiency of 3'-processing catalyzed by ELAC2, retains the tRNA product after ELAC2 processing and presents the nascent tRNA to the mitochondrial CCA tRNA nucleotidyltransferase TRNT1 enzyme. In addition to tRNA N(1)-methyltransferase activity, TRMT10C/MRPP1 also acts as a mRNA N(1)-methyltransferase by mediating methylation of adenosine residues at the N(1) position of MT-ND5 mRNA. Associates with mitochondrial DNA complexes at the nucleoids to initiate RNA processing and ribosome assembly. This is tRNA methyltransferase 10 homolog C from Mus musculus (Mouse).